A 1069-amino-acid chain; its full sequence is Carbamoyl phosphate synthase large chain (1069 aa).

Residues 1–401 (MPLNKDIKKV…AFLKGIRSLE (401 aa)) form a carboxyphosphate synthetic domain region. Arginine 129, arginine 169, glycine 175, glycine 176, lysine 208, valine 210, glutamate 215, glycine 241, isoleucine 242, histidine 243, glutamine 284, and glutamate 298 together coordinate ATP. Residues 133 to 327 (RDMMNRIGEP…IAKLAAKIAL (195 aa)) enclose the ATP-grasp 1 domain. Glutamine 284, glutamate 298, and asparagine 300 together coordinate Mg(2+). Glutamine 284, glutamate 298, and asparagine 300 together coordinate Mn(2+). The interval 402-549 (IGKYSLDHNK…YSTYEQYDEV (148 aa)) is oligomerization domain. The carbamoyl phosphate synthetic domain stretch occupies residues 550–932 (EVSNNKKVIV…ALYKGFVGAY (383 aa)). Residues 674–864 (DELLERLGIS…IVDLATQVML (191 aa)) form the ATP-grasp 2 domain. ATP is bound by residues arginine 710, lysine 749, leucine 751, glutamate 755, glycine 780, valine 781, histidine 782, serine 783, glutamine 823, and glutamate 835. Residues glutamine 823, glutamate 835, and asparagine 837 each coordinate Mg(2+). The Mn(2+) site is built by glutamine 823, glutamate 835, and asparagine 837. One can recognise an MGS-like domain in the interval 932-1069 (YMYPSKEKGK…KDLEVFNIAK (138 aa)). The allosteric domain stretch occupies residues 933–1069 (MYPSKEKGKI…KDLEVFNIAK (137 aa)).

It belongs to the CarB family. In terms of assembly, composed of two chains; the small (or glutamine) chain promotes the hydrolysis of glutamine to ammonia, which is used by the large (or ammonia) chain to synthesize carbamoyl phosphate. Tetramer of heterodimers (alpha,beta)4. It depends on Mg(2+) as a cofactor. Mn(2+) serves as cofactor.

The catalysed reaction is hydrogencarbonate + L-glutamine + 2 ATP + H2O = carbamoyl phosphate + L-glutamate + 2 ADP + phosphate + 2 H(+). The enzyme catalyses hydrogencarbonate + NH4(+) + 2 ATP = carbamoyl phosphate + 2 ADP + phosphate + 2 H(+). It participates in amino-acid biosynthesis; L-arginine biosynthesis; carbamoyl phosphate from bicarbonate: step 1/1. Its pathway is pyrimidine metabolism; UMP biosynthesis via de novo pathway; (S)-dihydroorotate from bicarbonate: step 1/3. Functionally, large subunit of the glutamine-dependent carbamoyl phosphate synthetase (CPSase). CPSase catalyzes the formation of carbamoyl phosphate from the ammonia moiety of glutamine, carbonate, and phosphate donated by ATP, constituting the first step of 2 biosynthetic pathways, one leading to arginine and/or urea and the other to pyrimidine nucleotides. The large subunit (synthetase) binds the substrates ammonia (free or transferred from glutamine from the small subunit), hydrogencarbonate and ATP and carries out an ATP-coupled ligase reaction, activating hydrogencarbonate by forming carboxy phosphate which reacts with ammonia to form carbamoyl phosphate. The sequence is that of Carbamoyl phosphate synthase large chain from Clostridium beijerinckii (strain ATCC 51743 / NCIMB 8052) (Clostridium acetobutylicum).